We begin with the raw amino-acid sequence, 534 residues long: Glucans biosynthesis protein D (534 aa).

The segment at residues 1–28 (MYRRDFLKSVTAAWVAFGLPNPLGGAFA) is a signal peptide (tat-type signal).

The protein belongs to the OpgD/OpgG family. Predicted to be exported by the Tat system. The position of the signal peptide cleavage has not been experimentally proven.

Its subcellular location is the periplasm. It functions in the pathway glycan metabolism; osmoregulated periplasmic glucan (OPG) biosynthesis. Probably involved in the control of the structural glucose backbone of osmoregulated periplasmic glucans (OPGs). The polypeptide is Glucans biosynthesis protein D (Xylella fastidiosa (strain M23)).